Consider the following 370-residue polypeptide: Protein STRICTOSIDINE SYNTHASE-LIKE 4 (370 aa).

The N-terminal stretch at Met-1–Ser-21 is a signal peptide. Asn-101 is a glycosylation site (N-linked (GlcNAc...) asparagine). Tyr-303 is modified (phosphotyrosine).

This sequence belongs to the strictosidine synthase family.

Its subcellular location is the vacuole. The protein is Protein STRICTOSIDINE SYNTHASE-LIKE 4 of Arabidopsis thaliana (Mouse-ear cress).